The sequence spans 694 residues: Glycine--tRNA ligase beta subunit (694 aa).

The protein belongs to the class-II aminoacyl-tRNA synthetase family. In terms of assembly, tetramer of two alpha and two beta subunits.

It localises to the cytoplasm. It catalyses the reaction tRNA(Gly) + glycine + ATP = glycyl-tRNA(Gly) + AMP + diphosphate. The protein is Glycine--tRNA ligase beta subunit of Shewanella denitrificans (strain OS217 / ATCC BAA-1090 / DSM 15013).